A 386-amino-acid chain; its full sequence is Succinate--CoA ligase [ADP-forming] subunit beta (386 aa).

Residues 9 to 244 (KEILHKFNVP…YDEEVKEEIE (236 aa)) enclose the ATP-grasp domain. ATP-binding positions include Lys46, 53 to 55 (GRG), Glu99, Ser102, and Glu107. Mg(2+) is bound by residues Asn199 and Asp213. Substrate-binding positions include Asn264 and 321–323 (GIM).

It belongs to the succinate/malate CoA ligase beta subunit family. As to quaternary structure, heterotetramer of two alpha and two beta subunits. Mg(2+) serves as cofactor.

The catalysed reaction is succinate + ATP + CoA = succinyl-CoA + ADP + phosphate. The enzyme catalyses GTP + succinate + CoA = succinyl-CoA + GDP + phosphate. Its pathway is carbohydrate metabolism; tricarboxylic acid cycle; succinate from succinyl-CoA (ligase route): step 1/1. Succinyl-CoA synthetase functions in the citric acid cycle (TCA), coupling the hydrolysis of succinyl-CoA to the synthesis of either ATP or GTP and thus represents the only step of substrate-level phosphorylation in the TCA. The beta subunit provides nucleotide specificity of the enzyme and binds the substrate succinate, while the binding sites for coenzyme A and phosphate are found in the alpha subunit. This chain is Succinate--CoA ligase [ADP-forming] subunit beta, found in Wolbachia sp. subsp. Brugia malayi (strain TRS).